The primary structure comprises 118 residues: Large ribosomal subunit protein bL20 (118 aa).

This sequence belongs to the bacterial ribosomal protein bL20 family.

In terms of biological role, binds directly to 23S ribosomal RNA and is necessary for the in vitro assembly process of the 50S ribosomal subunit. It is not involved in the protein synthesizing functions of that subunit. The chain is Large ribosomal subunit protein bL20 from Psychrobacter arcticus (strain DSM 17307 / VKM B-2377 / 273-4).